The following is a 444-amino-acid chain: Citrate-proton symporter (444 aa).

Topologically, residues 1 to 41 (MPTARCSMRASSTAPVRMMATAGGARIGAILRVTSGNFLEQ) are cytoplasmic. A helical transmembrane segment spans residues 42–62 (FDFFLFGFYATYIAHTFFPAS). The Periplasmic portion of the chain corresponds to 63 to 72 (SEFASLMMTF). Residues 73 to 93 (AVFGAGFLMRPIGAIVLGAYI) form a helical membrane-spanning segment. Residues 94-114 (DKVGRRKGLIVTLSIMATGTF) are Cytoplasmic-facing. Residues 115 to 135 (LIVLIPSYQTIGLWAPLLVLI) traverse the membrane as a helical segment. Residues 136 to 137 (GR) are Periplasmic-facing. Residues 138 to 158 (LLQGFSAGAELGGVSVYLAEI) form a helical membrane-spanning segment. Topologically, residues 159–177 (ATPGRKGFYTSWQSGSQQV) are cytoplasmic. Residues 178–198 (AIMVAAAMGFALNAVLEPSAI) form a helical membrane-spanning segment. Position 199 (S199) is a topological domain, periplasmic. A helical membrane pass occupies residues 200 to 220 (DWGWRIPFLFGVLIVPFIFIL). Residues 221-251 (RRKLEETQEFTARRHHLAMRQVFATLLANWQ) are Cytoplasmic-facing. The helical transmembrane segment at 252–272 (VVIAGMMMVAMTTTAFYLITV) threads the bilayer. The Periplasmic portion of the chain corresponds to 273 to 289 (YAPTFGKKVLMLSASDS). Residues 290–310 (LLVTLLVAISNFFWLPVGGAL) traverse the membrane as a helical segment. At 311–318 (SDRFGRRS) the chain is on the cytoplasmic side. Residues 319 to 339 (VLIAMTLLALATAWPALTMLA) traverse the membrane as a helical segment. Residue N340 is a topological domain, periplasmic. Residues 341-361 (APSFLMMLSVLLWLSFIYGMY) traverse the membrane as a helical segment. Residues 362–379 (NGAMIPALTEIMPAEVRV) are Cytoplasmic-facing. A helical membrane pass occupies residues 380–400 (AGFSLAYSLATAVFGGFTPVI). Residues 401–411 (STALIEYTGDK) lie on the Periplasmic side of the membrane. Residues 412-432 (ASPGYWMSFAAICGLLATCYL) form a helical membrane-spanning segment. Topologically, residues 433 to 444 (YRRSAVALQTAR) are cytoplasmic.

The protein belongs to the major facilitator superfamily. Metabolite:H+ Symporter (MHS) family (TC 2.A.1.6) family.

Its subcellular location is the cell inner membrane. Functionally, uptake of citrate across the boundary membrane with the concomitant transport of protons into the cell (symport system). The sequence is that of Citrate-proton symporter (citH) from Klebsiella pneumoniae.